The chain runs to 387 residues: Cytochrome b (387 aa).

The next 4 membrane-spanning stretches (helical) occupy residues 32 to 52, 76 to 98, 113 to 133, and 179 to 199; these read FGSL…TLAM, WLVR…LHIG, TWAI…LGYV, and FFAL…MHLI. Residues His82 and His96 each coordinate heme b. The heme b site is built by His183 and His197. His202 is a binding site for a ubiquinone. A run of 4 helical transmembrane segments spans residues 226–246, 290–310, 322–342, and 349–369; these read FIFK…IFVF, LLGV…PITD, LSKV…QIGA, and FIEF…VIVP.

Belongs to the cytochrome b family. In terms of assembly, fungal cytochrome b-c1 complex contains 10 subunits; 3 respiratory subunits, 2 core proteins and 5 low-molecular weight proteins. Cytochrome b-c1 complex is a homodimer. The cofactor is heme b.

The protein resides in the mitochondrion inner membrane. Its function is as follows. Component of the ubiquinol-cytochrome c reductase complex (complex III or cytochrome b-c1 complex) that is part of the mitochondrial respiratory chain. The b-c1 complex mediates electron transfer from ubiquinol to cytochrome c. Contributes to the generation of a proton gradient across the mitochondrial membrane that is then used for ATP synthesis. The sequence is that of Cytochrome b (cob) from Emericella nidulans (Aspergillus nidulans).